We begin with the raw amino-acid sequence, 406 residues long: Tryptophan 2,3-dioxygenase (406 aa).

Residues 72 to 76 (FIVTH) and Arg-144 each bind substrate. Heme is bound at residue His-328. Thr-342 is a binding site for substrate.

The protein belongs to the tryptophan 2,3-dioxygenase family. Homotetramer. Dimer of dimers. Requires heme as cofactor.

The catalysed reaction is L-tryptophan + O2 = N-formyl-L-kynurenine. Its pathway is amino-acid degradation; L-tryptophan degradation via kynurenine pathway; L-kynurenine from L-tryptophan: step 1/2. Functionally, heme-dependent dioxygenase that catalyzes the oxidative cleavage of the L-tryptophan (L-Trp) pyrrole ring and converts L-tryptophan to N-formyl-L-kynurenine. Catalyzes the oxidative cleavage of the indole moiety. The sequence is that of Tryptophan 2,3-dioxygenase from Xenopus laevis (African clawed frog).